Consider the following 763-residue polypeptide: High glucose sensor RGT2 (763 aa).

Positions 1–28 are disordered; sequence MNDSQNCLRQREENSHLNPGNDFGHHQG. Topologically, residues 1–99 are cytoplasmic; the sequence is MNDSQNCLRQ…PLPLRSNVMS (99 aa). Residues 100–120 form a helical membrane-spanning segment; the sequence is VLVGIFVAVGGFLFGYDTGLI. Residues 121–144 lie on the Extracellular side of the membrane; sequence NSITDMPYVKTYIAPNHSYFTTSQ. N136 carries N-linked (GlcNAc...) asparagine glycosylation. The helical transmembrane segment at 145–165 threads the bilayer; sequence IAILVSFLSLGTFFGALIAPY. The Cytoplasmic segment spans residues 166-175; it reads ISDSYGRKPT. A helical membrane pass occupies residues 176 to 196; the sequence is IMFSTAVIFSIGNSLQVASGG. Position 197 (L197) is a topological domain, extracellular. Residues 198-218 form a helical membrane-spanning segment; sequence VLLIVGRVISGIGIGIISAVV. The Cytoplasmic segment spans residues 219-231; that stretch reads PLYQAEAAQKNLR. A helical membrane pass occupies residues 232–252; sequence GAIISSYQWAITIGLLVSSAV. Over 253 to 266 the chain is Extracellular; that stretch reads SQGTHSKNGPSSYR. The chain crosses the membrane as a helical span at residues 267 to 287; that stretch reads IPIGLQYVWSSILAVGMIFLP. Topologically, residues 288–357 are cytoplasmic; it reads ESPRYYVLKD…SENRPKQILR (70 aa). Residues 358–378 form a helical membrane-spanning segment; the sequence is IFTGIAIQAFQQASGINFIFY. At 379-393 the chain is on the extracellular side; that stretch reads YGVNFFNNTGVDNSY. A glycan (N-linked (GlcNAc...) asparagine) is linked at N385. Residues 394 to 414 traverse the membrane as a helical segment; it reads LVSFISYAVNVAFSIPGMYLV. The Cytoplasmic portion of the chain corresponds to 415–421; the sequence is DRIGRRP. The chain crosses the membrane as a helical span at residues 422-442; it reads VLLAGGVIMAIANLVIAIVGV. At 443 to 452 the chain is on the extracellular side; the sequence is SEGKTVVASK. A helical transmembrane segment spans residues 453-473; that stretch reads IMIAFICLFIAAFSATWGGVV. Residues 474 to 491 lie on the Cytoplasmic side of the membrane; that stretch reads WVVSAELYPLGVRSKCTA. Residues 492–512 form a helical membrane-spanning segment; that stretch reads ICAAANWLVNFTCALITPYIV. Topologically, residues 513–524 are extracellular; that stretch reads DVGSHTSSMGPK. The chain crosses the membrane as a helical span at residues 525-545; the sequence is IFFIWGGLNVVAVIVVYFAVY. At 546–763 the chain is on the cytoplasmic side; that stretch reads ETRGLTLEEI…SKHSQYTSPQ (218 aa). Over residues 725–737 the composition is skewed to low complexity; it reads SSTTSNDTSFSPS. Residues 725-763 form a disordered region; sequence SSTTSNDTSFSPSHNSNARTSSNWTSDLASKHSQYTSPQ. The segment covering 738–763 has biased composition (polar residues); it reads HNSNARTSSNWTSDLASKHSQYTSPQ.

Belongs to the major facilitator superfamily. Sugar transporter (TC 2.A.1.1) family. In terms of assembly, interacts with YCK1. Interacts with MTH1 and STD1. Post-translationally, phosphorylated in the C-terminal tail on Yck consensus sites in a yeast casein kinases YCK1 and YCK2 (Yck)-dependent manner. This phosphorylation is required for interaction with HXT corepressors MTH1 and STD1 and ultimately HXT expression.

It localises to the cell membrane. Low-affinity high glucose sensor that is part of the sensor/receptor-repressor (SSR) glucose-signaling pathway, which detects extracellular glucose and induces expression of glucose transporters that bring glucose into the cell. The transporter-like sensor generates an intracellular signal in the presence of high levels of glucose to promote high glucose-induced expression of HXT1. Binding of glucose to the RGT2 transmembrane domain activates a downstream signaling cascade, leading to phosphorylation of the RGT1 corepressors MTH1 and STD1, targeting them for SCF(Grr1)-dependent ubiquitination and degradation. Depletion of the corepressors robs RGT1 of its ability to repress expression of HXT genes, leading to accumulation of glucose transporters in the plasma membrane. Even though RGT2 is similar to glucose transporters, it appears to be unable to transport glucose. The polypeptide is High glucose sensor RGT2 (Saccharomyces cerevisiae (strain ATCC 204508 / S288c) (Baker's yeast)).